Here is a 109-residue protein sequence, read N- to C-terminus: uncharacterized protein (109 aa).

Residues 29 to 49 (ITIIITLVIIFIIFTLIILYF) form a helical membrane-spanning segment.

It localises to the membrane. This is an uncharacterized protein from Sputnik virophage.